Reading from the N-terminus, the 619-residue chain is Chaperone protein HscA homolog (619 aa).

Belongs to the heat shock protein 70 family.

In terms of biological role, chaperone involved in the maturation of iron-sulfur cluster-containing proteins. Has a low intrinsic ATPase activity which is markedly stimulated by HscB. In Shewanella amazonensis (strain ATCC BAA-1098 / SB2B), this protein is Chaperone protein HscA homolog.